A 143-amino-acid chain; its full sequence is FAM161 homolog famh-136 (143 aa).

This sequence belongs to the FAM136 family.

It is found in the cytoplasm. Its function is as follows. May play a role in locomotion and behavior. The sequence is that of FAM161 homolog famh-136 from Caenorhabditis elegans.